The sequence spans 82 residues: Small ribosomal subunit protein bS16 (82 aa).

The protein belongs to the bacterial ribosomal protein bS16 family.

This Microcystis aeruginosa (strain NIES-843 / IAM M-2473) protein is Small ribosomal subunit protein bS16.